Consider the following 309-residue polypeptide: Elongation factor Ts (309 aa).

The involved in Mg(2+) ion dislocation from EF-Tu stretch occupies residues 80-83; sequence TDFV.

It belongs to the EF-Ts family.

It is found in the cytoplasm. Its function is as follows. Associates with the EF-Tu.GDP complex and induces the exchange of GDP to GTP. It remains bound to the aminoacyl-tRNA.EF-Tu.GTP complex up to the GTP hydrolysis stage on the ribosome. This chain is Elongation factor Ts, found in Rhodospirillum rubrum (strain ATCC 11170 / ATH 1.1.1 / DSM 467 / LMG 4362 / NCIMB 8255 / S1).